Consider the following 146-residue polypeptide: Mediator of RNA polymerase II transcription subunit 10 (146 aa).

This sequence belongs to the Mediator complex subunit 10 family. In terms of assembly, component of the Mediator complex.

Its subcellular location is the nucleus. Functionally, component of the Mediator complex, a coactivator involved in the regulated transcription of nearly all RNA polymerase II-dependent genes. Mediator functions as a bridge to convey information from gene-specific regulatory proteins to the basal RNA polymerase II transcription machinery. Mediator is recruited to promoters by direct interactions with regulatory proteins and serves as a scaffold for the assembly of a functional preinitiation complex with RNA polymerase II and the general transcription factors. The protein is Mediator of RNA polymerase II transcription subunit 10 (NUT2) of Scheffersomyces stipitis (strain ATCC 58785 / CBS 6054 / NBRC 10063 / NRRL Y-11545) (Yeast).